Reading from the N-terminus, the 242-residue chain is UPF0246 protein SP70585_1589 (242 aa).

It belongs to the UPF0246 family.

This is UPF0246 protein SP70585_1589 from Streptococcus pneumoniae (strain 70585).